Here is a 595-residue protein sequence, read N- to C-terminus: Cyclin-dependent kinase-like 3 (595 aa).

The Protein kinase domain maps to 4 to 286 (YETLGKVGEG…STDLLRHDYF (283 aa)). Residues 10-18 (VGEGSYGTV) and K33 each bind ATP. Residues 45–51 (KIATREI) carry the [NKR]KIAxRE motif. Residue D125 is the Proton acceptor of the active site. T158 bears the Phosphothreonine mark. Y160 is modified (phosphotyrosine). Disordered stretches follow at residues 362–427 (VIKA…PHAG), 448–513 (SSNL…NKRK), and 551–586 (RESK…GKNL). Over residues 368-386 (GKGDVPDQKKPEYEGDHRQ) the composition is skewed to basic and acidic residues. A compositionally biased stretch (polar residues) spans 387-397 (QGTADDTQPSS). Low complexity predominate over residues 448–457 (SSNLSHPNSR). Polar residues-rich tracts occupy residues 468–491 (SSQT…QVQT) and 499–509 (RTGQNDQISSG). Residues 570 to 585 (NQEKQEGGDGDCEGKN) are compositionally biased toward basic and acidic residues.

The protein belongs to the protein kinase superfamily. CMGC Ser/Thr protein kinase family. CDC2/CDKX subfamily.

It localises to the cytoplasm. The enzyme catalyses L-seryl-[protein] + ATP = O-phospho-L-seryl-[protein] + ADP + H(+). It catalyses the reaction L-threonyl-[protein] + ATP = O-phospho-L-threonyl-[protein] + ADP + H(+). This chain is Cyclin-dependent kinase-like 3, found in Mus musculus (Mouse).